We begin with the raw amino-acid sequence, 122 residues long: Small ribosomal subunit protein uS13 (122 aa).

Residues 98 to 122 (VRGQRTHTNARTRKGPAKAIAGKKK) form a disordered region.

It belongs to the universal ribosomal protein uS13 family. In terms of assembly, part of the 30S ribosomal subunit. Forms a loose heterodimer with protein S19. Forms two bridges to the 50S subunit in the 70S ribosome.

Located at the top of the head of the 30S subunit, it contacts several helices of the 16S rRNA. In the 70S ribosome it contacts the 23S rRNA (bridge B1a) and protein L5 of the 50S subunit (bridge B1b), connecting the 2 subunits; these bridges are implicated in subunit movement. Contacts the tRNAs in the A and P-sites. In Ruegeria pomeroyi (strain ATCC 700808 / DSM 15171 / DSS-3) (Silicibacter pomeroyi), this protein is Small ribosomal subunit protein uS13.